The sequence spans 118 residues: uncharacterized protein (118 aa).

It to M.jannaschii MJ0310 and MJ1340.

This is an uncharacterized protein from Methanocaldococcus jannaschii (strain ATCC 43067 / DSM 2661 / JAL-1 / JCM 10045 / NBRC 100440) (Methanococcus jannaschii).